Here is a 193-residue protein sequence, read N- to C-terminus: Cyanate hydratase (193 aa).

Residues arginine 121, glutamate 124, and serine 147 contribute to the active site.

It belongs to the cyanase family.

It carries out the reaction cyanate + hydrogencarbonate + 3 H(+) = NH4(+) + 2 CO2. Its function is as follows. Catalyzes the reaction of cyanate with bicarbonate to produce ammonia and carbon dioxide. This chain is Cyanate hydratase, found in Phaeodactylum tricornutum (strain CCAP 1055/1).